Reading from the N-terminus, the 172-residue chain is Ribosome maturation factor RimM (172 aa).

Residues 95-168 form the PRC barrel domain; it reads AEGEFYYHQI…RVDVEIMEGL (74 aa).

This sequence belongs to the RimM family. In terms of assembly, binds ribosomal protein uS19.

The protein resides in the cytoplasm. An accessory protein needed during the final step in the assembly of 30S ribosomal subunit, possibly for assembly of the head region. Essential for efficient processing of 16S rRNA. May be needed both before and after RbfA during the maturation of 16S rRNA. It has affinity for free ribosomal 30S subunits but not for 70S ribosomes. The polypeptide is Ribosome maturation factor RimM (Streptococcus equi subsp. zooepidemicus (strain MGCS10565)).